The chain runs to 473 residues: Membrane protein TMS1 (473 aa).

The Cytoplasmic portion of the chain corresponds to 1 to 6; the sequence is MGAVIS. A helical membrane pass occupies residues 7 to 29; it reads LPVSMAGSFVASCFGGCCSNLVT. The Vacuolar portion of the chain corresponds to 30–38; it reads KTASSLGSS. Residues 39–61 traverse the membrane as a helical segment; the sequence is SLGTRLLYAVWLLLNSLISWVSY. Topologically, residues 62 to 81 are cytoplasmic; that stretch reads SANKSILWPGKTCTGTGECG. Residues 82–104 form a helical membrane-spanning segment; sequence FFTVHRLNFALGCLHLILALVLT. At 105–118 the chain is on the vacuolar side; the sequence is GVKSTNDVRAALQN. The chain crosses the membrane as a helical span at residues 119-138; sequence SWWSLKFILYLCLIVLSFVI. Topologically, residues 139 to 144 are cytoplasmic; the sequence is PNDFYI. Residues 145 to 167 form a helical membrane-spanning segment; the sequence is FFSKWVSVPSGAIFILVGLILLV. Residues 168-194 lie on the Vacuolar side of the membrane; that stretch reads DFAHEWAETCISHVESEDEDSSFWQRF. The helical transmembrane segment at 195–217 threads the bilayer; sequence LVLGTTSMYTASIIMTVVMYVMF. At 218–228 the chain is on the cytoplasmic side; the sequence is CHQQCNMNQTA. A helical membrane pass occupies residues 229 to 246; that stretch reads VTVNLILTVITLVLSVNP. The Vacuolar segment spans residues 247–295; it reads KIQEANPKSGLAQSSMVSVYCTYLTMSAMSSEPDDKMCNPLVRSSGTRK. Residues 296–318 form a helical membrane-spanning segment; sequence FSIILGSLFTFIAIAYTTTRAAA. The Cytoplasmic portion of the chain corresponds to 319–398; the sequence is NSAFQGTNTN…DDERTGTKYN (80 aa). A helical membrane pass occupies residues 399-421; the sequence is YTLFHVIFFLATQWIAILLTINV. Topologically, residues 422–435 are vacuolar; that stretch reads TQDDVGDFIPVGRT. A helical transmembrane segment spans residues 436–458; that stretch reads YFYSWVKIVSAWICYALYGWTVV. Over 459 to 473 the chain is Cytoplasmic; sequence APAIMPDRFDYENYY.

Belongs to the TDE1 family.

The protein resides in the membrane. The polypeptide is Membrane protein TMS1 (TMS1) (Saccharomyces cerevisiae (strain ATCC 204508 / S288c) (Baker's yeast)).